A 141-amino-acid polypeptide reads, in one-letter code: Lysozyme P (141 aa).

Residues 1-18 (MKAFLVICALTLTAVATQ) form the signal peptide. One can recognise a C-type lysozyme domain in the interval 20 to 141 (RTMDRCSLAR…GSLPSINSCF (122 aa)). 4 cysteine pairs are disulfide-bonded: cysteine 25/cysteine 140, cysteine 46/cysteine 130, cysteine 81/cysteine 97, and cysteine 93/cysteine 111. Catalysis depends on residues glutamate 51 and aspartate 69.

It belongs to the glycosyl hydrolase 22 family. As to expression, salivary gland.

The enzyme catalyses Hydrolysis of (1-&gt;4)-beta-linkages between N-acetylmuramic acid and N-acetyl-D-glucosamine residues in a peptidoglycan and between N-acetyl-D-glucosamine residues in chitodextrins.. Unlikely to play an active role in the humoral immune defense. May have a function in the digestion of bacteria in the food. The sequence is that of Lysozyme P (LysP) from Drosophila melanogaster (Fruit fly).